A 519-amino-acid chain; its full sequence is Apolipoprotein N-acyltransferase (519 aa).

6 consecutive transmembrane segments (helical) span residues 6–26 (APLG…IWIF), 47–67 (LTAI…ITGV), 83–103 (IAAF…FVWL), 126–146 (LFIL…SHSI), 174–194 (LLSA…IDFL), and 206–226 (WHYF…GWLL). One can recognise a CN hydrolase domain in the interval 244-482 (IQGNIPNQIK…YEIHAAPIYR (239 aa)). Catalysis depends on Glu285, which acts as the Proton acceptor. Lys343 is a catalytic residue. Cys394 acts as the Nucleophile in catalysis. The helical transmembrane segment at 496–516 (VVFLLLVVSAIAWLYQIVFPL) threads the bilayer.

The protein belongs to the CN hydrolase family. Apolipoprotein N-acyltransferase subfamily.

It localises to the cell inner membrane. The catalysed reaction is N-terminal S-1,2-diacyl-sn-glyceryl-L-cysteinyl-[lipoprotein] + a glycerophospholipid = N-acyl-S-1,2-diacyl-sn-glyceryl-L-cysteinyl-[lipoprotein] + a 2-acyl-sn-glycero-3-phospholipid + H(+). It functions in the pathway protein modification; lipoprotein biosynthesis (N-acyl transfer). Functionally, catalyzes the phospholipid dependent N-acylation of the N-terminal cysteine of apolipoprotein, the last step in lipoprotein maturation. The polypeptide is Apolipoprotein N-acyltransferase (Synechocystis sp. (strain ATCC 27184 / PCC 6803 / Kazusa)).